The following is a 254-amino-acid chain: 5'-nucleotidase SurE (254 aa).

A divalent metal cation-binding residues include D8, D9, S38, and N91.

This sequence belongs to the SurE nucleotidase family. A divalent metal cation serves as cofactor.

The protein localises to the cytoplasm. The enzyme catalyses a ribonucleoside 5'-phosphate + H2O = a ribonucleoside + phosphate. Its function is as follows. Nucleotidase that shows phosphatase activity on nucleoside 5'-monophosphates. The sequence is that of 5'-nucleotidase SurE from Anaeromyxobacter dehalogenans (strain 2CP-1 / ATCC BAA-258).